The primary structure comprises 130 residues: ATP synthase epsilon chain (130 aa).

This sequence belongs to the ATPase epsilon chain family. F-type ATPases have 2 components, CF(1) - the catalytic core - and CF(0) - the membrane proton channel. CF(1) has five subunits: alpha(3), beta(3), gamma(1), delta(1), epsilon(1). CF(0) has three main subunits: a, b and c.

It is found in the cell inner membrane. Functionally, produces ATP from ADP in the presence of a proton gradient across the membrane. In Fuscovulum blasticum (Rhodobacter blasticus), this protein is ATP synthase epsilon chain (atpC).